A 1258-amino-acid polypeptide reads, in one-letter code: Splicing factor, arginine/serine-rich 19 (1258 aa).

Disordered regions lie at residues 1 to 32 (MEEE…LSPS), 159 to 345 (KTVS…PRRR), 370 to 398 (GGPA…EEEP), 410 to 1034 (PRQP…PPPM), 1114 to 1154 (GSLP…DKYL), and 1223 to 1258 (FRKH…LPPL). Residues 7-27 (SRGKTEESGEDRGDGPPDRDP) show a composition bias toward basic and acidic residues. Positions 193–207 (SSASSSPSPSPSSSS) are enriched in low complexity. Over residues 208–223 (PSPPPPPPPPPPPALP) the composition is skewed to pro residues. Basic and acidic residues predominate over residues 228 to 237 (DIYDPFHPTD). The residue at position 241 (serine 241) is a Phosphoserine. Polar residues predominate over residues 256 to 266 (TGSNPSSSAGT). Residues 269–283 (PEEEEEEEEEEEEEG) are compositionally biased toward acidic residues. Threonine 329 bears the Phosphothreonine mark. Pro residues predominate over residues 374–383 (LPLPPLPPTD). Over residues 384–395 (PEIEEGEIVQPE) the composition is skewed to acidic residues. A compositionally biased stretch (low complexity) spans 414–426 (PASVATLASVAAP). Serine 444 and serine 449 each carry phosphoserine. Over residues 480 to 491 (KILTQRRERYRQ) the composition is skewed to basic residues. 4 positions are modified to phosphoserine: serine 493, serine 495, serine 512, and serine 520. 2 stretches are compositionally biased toward basic residues: residues 540–555 (TARR…RSRS) and 562–579 (RGSH…RRRS). Residues serine 579 and serine 581 each carry the phosphoserine modification. Positions 594–613 (RERHRGKRREGGKKKKKRSR) are enriched in basic residues. Basic and acidic residues predominate over residues 614–625 (SRAEKRSGDLEK). Phosphothreonine is present on threonine 665. Phosphoserine occurs at positions 678 and 684. Tyrosine 691 is subject to Phosphotyrosine. Residues serine 693 and serine 697 each carry the phosphoserine modification. Composition is skewed to basic and acidic residues over residues 698–711 (ADER…DRRR) and 721–743 (SREK…DRSS). Composition is skewed to low complexity over residues 752-777 (SAPG…SCSS) and 795-806 (SSTTPAKDSSSS). A Glycyl lysine isopeptide (Lys-Gly) (interchain with G-Cter in SUMO2) cross-link involves residue lysine 814. Residues 815–833 (FSRDRESRSPFLKPDERAP) are compositionally biased toward basic and acidic residues. Residues serine 821 and serine 823 each carry the phosphoserine modification. A compositionally biased stretch (basic residues) spans 845–877 (KPKKTKAKAKAGAKKAKGTKGKTKPSKTRKKVR). Phosphoserine is present on residues serine 878, serine 885, serine 912, and serine 914. The span at 924–937 (STPPPKVAPPPPAL) shows a compositional bias: pro residues. Threonine 925 and threonine 938 each carry phosphothreonine. Over residues 940–949 (DSQTVDSSCK) the composition is skewed to polar residues. Serine 941 is subject to Phosphoserine. Threonine 950 carries the phosphothreonine modification. The span at 971–986 (EEEEEEEEEEEEEEEQ) shows a compositional bias: acidic residues. The span at 987–1019 (QPATTTATSTAAAAPSTAPSAGSTAGDSGAEDG) shows a compositional bias: low complexity. The necessary for interaction with the CTD domain of POLR2A stretch occupies residues 1133 to 1258 (PASDKREGSS…GGPGLPLPPL (126 aa)). Residues 1135-1154 (SDKREGSSSSEGRGDTDKYL) show a composition bias toward basic and acidic residues. The segment covering 1246–1258 (PDKGGPGLPLPPL) has biased composition (pro residues).

It belongs to the splicing factor SR family. As to quaternary structure, interacts with POLR2A.

The protein resides in the nucleus. Functionally, may function in pre-mRNA splicing. This is Splicing factor, arginine/serine-rich 19 (Scaf1) from Rattus norvegicus (Rat).